The following is a 374-amino-acid chain: Actin-related protein 2/3 complex subunit 2B (374 aa).

This sequence belongs to the ARPC2 family. Component of the Arp2/3 complex composed of ARP2, ARP3, ARPC1/p41-ARC, ARPC2/p34-ARC, ARPC3/p21-ARC, ARPC4/p20-ARC and ARPC5/p16-ARC. In terms of tissue distribution, expressed at low levels in all tissues with a relatively highest expression in inflorescences.

It is found in the cytoplasm. It localises to the cytoskeleton. Its subcellular location is the cell projection. In terms of biological role, functions as actin-binding component of the Arp2/3 complex which is involved in regulation of actin polymerization and together with an activating nucleation-promoting factor (NPF) mediates the formation of branched actin networks. Seems to contact the mother actin filament. Arp2/3 complex plays a critical role in the control of cell morphogenesis via the modulation of cell polarity development. The chain is Actin-related protein 2/3 complex subunit 2B (ARPC2B) from Arabidopsis thaliana (Mouse-ear cress).